The sequence spans 142 residues: Transcription antitermination protein NusB (142 aa).

Belongs to the NusB family.

Functionally, involved in transcription antitermination. Required for transcription of ribosomal RNA (rRNA) genes. Binds specifically to the boxA antiterminator sequence of the ribosomal RNA (rrn) operons. The chain is Transcription antitermination protein NusB from Borrelia garinii subsp. bavariensis (strain ATCC BAA-2496 / DSM 23469 / PBi) (Borreliella bavariensis).